A 172-amino-acid chain; its full sequence is Peptide deformylase (172 aa).

The Fe cation site is built by Cys92 and His134. Residue Glu135 is part of the active site. Fe cation is bound at residue His138.

Belongs to the polypeptide deformylase family. The cofactor is Fe(2+).

The enzyme catalyses N-terminal N-formyl-L-methionyl-[peptide] + H2O = N-terminal L-methionyl-[peptide] + formate. Its function is as follows. Removes the formyl group from the N-terminal Met of newly synthesized proteins. Requires at least a dipeptide for an efficient rate of reaction. N-terminal L-methionine is a prerequisite for activity but the enzyme has broad specificity at other positions. The protein is Peptide deformylase of Saccharophagus degradans (strain 2-40 / ATCC 43961 / DSM 17024).